Consider the following 229-residue polypeptide: Small ribosomal subunit protein uS3 (229 aa).

In terms of domain architecture, KH type-2 spans 39 to 107 (VRQYLTEKLK…TAQINIAEIR (69 aa)).

It belongs to the universal ribosomal protein uS3 family. In terms of assembly, part of the 30S ribosomal subunit. Forms a tight complex with proteins S10 and S14.

Its function is as follows. Binds the lower part of the 30S subunit head. Binds mRNA in the 70S ribosome, positioning it for translation. The polypeptide is Small ribosomal subunit protein uS3 (Shewanella frigidimarina (strain NCIMB 400)).